Here is a 390-residue protein sequence, read N- to C-terminus: ATP phosphoribosyltransferase regulatory subunit (390 aa).

This sequence belongs to the class-II aminoacyl-tRNA synthetase family. HisZ subfamily. As to quaternary structure, heteromultimer composed of HisG and HisZ subunits.

It localises to the cytoplasm. It participates in amino-acid biosynthesis; L-histidine biosynthesis; L-histidine from 5-phospho-alpha-D-ribose 1-diphosphate: step 1/9. In terms of biological role, required for the first step of histidine biosynthesis. May allow the feedback regulation of ATP phosphoribosyltransferase activity by histidine. The chain is ATP phosphoribosyltransferase regulatory subunit from Bacillus velezensis (strain DSM 23117 / BGSC 10A6 / LMG 26770 / FZB42) (Bacillus amyloliquefaciens subsp. plantarum).